The primary structure comprises 154 residues: 6,7-dimethyl-8-ribityllumazine synthase (154 aa).

Residues phenylalanine 24, 56–58 (SFE), and 80–82 (AVV) each bind 5-amino-6-(D-ribitylamino)uracil. Position 85-86 (85-86 (ET)) interacts with (2S)-2-hydroxy-3-oxobutyl phosphate. Histidine 88 acts as the Proton donor in catalysis. Residue phenylalanine 113 coordinates 5-amino-6-(D-ribitylamino)uracil. (2S)-2-hydroxy-3-oxobutyl phosphate is bound at residue arginine 127.

Belongs to the DMRL synthase family.

The catalysed reaction is (2S)-2-hydroxy-3-oxobutyl phosphate + 5-amino-6-(D-ribitylamino)uracil = 6,7-dimethyl-8-(1-D-ribityl)lumazine + phosphate + 2 H2O + H(+). The protein operates within cofactor biosynthesis; riboflavin biosynthesis; riboflavin from 2-hydroxy-3-oxobutyl phosphate and 5-amino-6-(D-ribitylamino)uracil: step 1/2. Catalyzes the formation of 6,7-dimethyl-8-ribityllumazine by condensation of 5-amino-6-(D-ribitylamino)uracil with 3,4-dihydroxy-2-butanone 4-phosphate. This is the penultimate step in the biosynthesis of riboflavin. The protein is 6,7-dimethyl-8-ribityllumazine synthase of Thermococcus gammatolerans (strain DSM 15229 / JCM 11827 / EJ3).